A 328-amino-acid chain; its full sequence is D-cysteine desulfhydrase (328 aa).

Lysine 51 is modified (N6-(pyridoxal phosphate)lysine).

This sequence belongs to the ACC deaminase/D-cysteine desulfhydrase family. In terms of assembly, homodimer. The cofactor is pyridoxal 5'-phosphate.

The enzyme catalyses D-cysteine + H2O = hydrogen sulfide + pyruvate + NH4(+) + H(+). Catalyzes the alpha,beta-elimination reaction of D-cysteine and of several D-cysteine derivatives. It could be a defense mechanism against D-cysteine. The polypeptide is D-cysteine desulfhydrase (Salmonella paratyphi A (strain AKU_12601)).